We begin with the raw amino-acid sequence, 258 residues long: Protein IMPACT homolog (258 aa).

Residues Glu-10 to Glu-114 form the RWD domain. Lys-187 participates in a covalent cross-link: Glycyl lysine isopeptide (Lys-Gly) (interchain with G-Cter in ubiquitin).

This sequence belongs to the IMPACT family. In terms of assembly, interacts (via N-terminus) with GCN1 (via C-terminus); this interaction reduces the GCN1-GCN20 complex formation and prevents the interaction of GCN1 with GCN2 protein kinase and GCN2 activation in amino acid-starved cells. Interacts (via C-terminus) with ACT1; this interaction occurs in a GCN1-independent manner. Interacts with RPL39; this interaction occurs in a GCN1-independent manner. Associates (via middle region) with ribosomes; this association occurs in a GCN1-independent manner and persists under amino acid starvation conditions.

The protein resides in the cytoplasm. It is found in the nucleus. In terms of biological role, translational regulator that ensures constant high levels of translation under amino acid starvation. Plays a role as a negative regulator of the GCN2 kinase activity; impairs GCN1-mediated GCN2 activation, and hence GCN2-mediated eIF-2-alpha phosphorylation in amino acid-starved cells and subsequent down-regulation of protein synthesis. In normal conditions, it resides in a actin complex and has no activity. The sequence is that of Protein IMPACT homolog (YIH1) from Saccharomyces cerevisiae (strain ATCC 204508 / S288c) (Baker's yeast).